The following is a 277-amino-acid chain: Outer membrane lipoprotein 1 (277 aa).

The N-terminal stretch at 1 to 19 (MSFKKILGVALVSALALTA) is a signal peptide. C20 is lipidated: N-palmitoyl cysteine. C20 carries S-diacylglycerol cysteine lipidation.

It belongs to the NlpA lipoprotein family.

The protein localises to the cell outer membrane. The sequence is that of Outer membrane lipoprotein 1 (plpA) from Mannheimia haemolytica (Pasteurella haemolytica).